We begin with the raw amino-acid sequence, 310 residues long: MEFKHVSVLLDECINALNIKEDGIYVDCTLGGAGHSSEIVKRLSSDGRLIRFDQDKDALKAAGERLKDYKNVTYVHSNFYAIYDVLTDLGIDGVDGILMDLGVSSYQLDNGERGFSYMQDAPLDMRMNRENEFSAYEIVNTYSEEELYRIIKEYGEEKFAKRIASFIVKNREEKNIETTLELVEIIKAAIPAKARREGPHPAKRTFQAIRIEVNKELEIISKTILDGVKKLNKGGRMAIITFHSLEDRIVKNTFKELANPCTCPSEFPVCVCNRKPEVKLISRKPIEASKEELEFNPRSRSAKLRIIEKL.

Residues 33–35, Asp53, Phe79, Asp100, and Gln107 each bind S-adenosyl-L-methionine; that span reads AGH.

Belongs to the methyltransferase superfamily. RsmH family.

It localises to the cytoplasm. It catalyses the reaction cytidine(1402) in 16S rRNA + S-adenosyl-L-methionine = N(4)-methylcytidine(1402) in 16S rRNA + S-adenosyl-L-homocysteine + H(+). Specifically methylates the N4 position of cytidine in position 1402 (C1402) of 16S rRNA. The polypeptide is Ribosomal RNA small subunit methyltransferase H (Clostridium perfringens (strain 13 / Type A)).